The following is a 614-amino-acid chain: Sorting nexin-18 (614 aa).

The SH3 domain maps to 1-61 (MALRARALYD…PASYVQVIRA (61 aa)). Residues 85-218 (GFEPLPAAPP…SQELGHGEPQ (134 aa)) form a disordered region. Pro residues predominate over residues 90-101 (PAAPPAAFPPLL). Positions 141–151 (SDDDWDDEWDD) are enriched in acidic residues. The 111-residue stretch at 266–376 (FQCTIDDPTK…HFLTCPSSTD (111 aa)) folds into the PX domain. The a 1,2-diacyl-sn-glycero-3-phospho-(1D-myo-inositol-4,5-bisphosphate) site is built by Arg-302, Lys-304, and Arg-342. The 204-residue stretch at 411 to 614 (LQEVESKIDG…EEALHKYDSV (204 aa)) folds into the BAR domain.

The protein belongs to the sorting nexin family. As to quaternary structure, heterodimer with SNX9. Interacts with ITCH. Interacts with dynamin-2 (DNM2), SYNJ1 and WASL. Interacts with the AP-1 complex. Interacts with FCHSD1 (via the F-BAR domain).

It is found in the endomembrane system. It localises to the endosome membrane. The protein localises to the recycling endosome membrane. The protein resides in the cell membrane. Its subcellular location is the cytoplasmic vesicle membrane. Its function is as follows. Involved in endocytosis and intracellular vesicle trafficking, both during interphase and at the end of mitosis. Required for efficient progress through mitosis and cytokinesis. Required for normal formation of the cleavage furrow at the end of mitosis. Plays a role in endocytosis via clathrin-coated pits, but also clathrin-independent, actin-dependent fluid-phase endocytosis. Plays a role in macropinocytosis. Binds to membranes enriched in phosphatidylinositol 4,5-bisphosphate and promotes membrane tubulation. Stimulates the GTPase activity of DNM2. Promotes DNM2 location at the plasma membrane. Together with DNM2, involved in autophagosome assembly by regulating trafficking from recycling endosomes of phospholipid scramblase ATG9A. This Mus musculus (Mouse) protein is Sorting nexin-18.